The primary structure comprises 152 residues: Transcriptional regulator MraZ (152 aa).

SpoVT-AbrB domains follow at residues 5 to 52 (ATLV…TLPE) and 81 to 124 (ASEC…DEQV).

It belongs to the MraZ family. Forms oligomers.

It localises to the cytoplasm. The protein localises to the nucleoid. Functionally, negatively regulates its own expression and that of the subsequent genes in the proximal part of the division and cell wall (dcw) gene cluster. Acts by binding directly to DNA. May also regulate the expression of genes outside the dcw cluster. This chain is Transcriptional regulator MraZ, found in Proteus mirabilis (strain HI4320).